We begin with the raw amino-acid sequence, 424 residues long: Interleukin-13 receptor subunit alpha-1 (424 aa).

The N-terminal stretch at M1–A25 is a signal peptide. At A26–T340 the chain is on the extracellular side. One can recognise a Fibronectin type-III 1 domain in the interval P32–G121. 4 N-linked (GlcNAc...) asparagine glycosylation sites follow: N35, N59, N103, and N136. C44 and C93 are disulfide-bonded. Disulfide bonds link C132-C142 and C171-C183. Residues K224–E336 form the Fibronectin type-III 2 domain. An N-linked (GlcNAc...) asparagine glycan is attached at N262. The WSXWS motif signature appears at W324 to S328. N-linked (GlcNAc...) asparagine glycosylation occurs at N338. Residues F341–L364 form a helical membrane-spanning segment. Over K365 to P424 the chain is Cytoplasmic. A Box 1 motif motif is present at residues I371–G379.

Belongs to the type I cytokine receptor family. Type 5 subfamily. Interleukin-13 receptor is a complex of IL4R, IL13RA1, and possibly other components. Interacts with TRAF3IP1. Interacts with IL4. In terms of tissue distribution, spleen, liver, thymus, heart, lung, kidney, testis, stomach, brain, skin, and colon; but not skeletal muscle.

It is found in the membrane. Its function is as follows. Binds with low affinity to interleukin-13 (IL13). Together with IL4RA can form a functional receptor for IL13. Also serves as an alternate accessory protein to the common cytokine receptor gamma chain for interleukin-4 (IL4) signaling, but cannot replace the function of IL2RG in allowing enhanced interleukin-2 (IL2) binding activity. The polypeptide is Interleukin-13 receptor subunit alpha-1 (Il13ra1) (Mus musculus (Mouse)).